Consider the following 77-residue polypeptide: DNA-directed RNA polymerase subunit epsilon (77 aa).

The protein belongs to the RNA polymerase subunit epsilon family. As to quaternary structure, RNAP is composed of a core of 2 alpha, a beta and a beta' subunit. The core is associated with a delta subunit, and at least one of epsilon or omega. When a sigma factor is associated with the core the holoenzyme is formed, which can initiate transcription.

It catalyses the reaction RNA(n) + a ribonucleoside 5'-triphosphate = RNA(n+1) + diphosphate. In terms of biological role, a non-essential component of RNA polymerase (RNAP). The protein is DNA-directed RNA polymerase subunit epsilon of Streptococcus pneumoniae (strain Hungary19A-6).